A 52-amino-acid chain; its full sequence is Large ribosomal subunit protein eL40 (52 aa).

Positions 20, 23, 34, and 39 each coordinate Zn(2+).

The protein belongs to the eukaryotic ribosomal protein eL40 family. In terms of assembly, component of the large ribosomal subunit. Mature ribosomes consist of a small (40S) and a large (60S) subunit. The 40S subunit contains about 32 different proteins and 1 molecule of RNA (18S). The 60S subunit contains 45 different proteins and 3 molecules of RNA (25S, 5.8S and 5S). It depends on Zn(2+) as a cofactor.

Its subcellular location is the cytoplasm. Its function is as follows. Component of the ribosome, a large ribonucleoprotein complex responsible for the synthesis of proteins in the cell. The small ribosomal subunit (SSU) binds messenger RNAs (mRNAs) and translates the encoded message by selecting cognate aminoacyl-transfer RNA (tRNA) molecules. The large subunit (LSU) contains the ribosomal catalytic site termed the peptidyl transferase center (PTC), which catalyzes the formation of peptide bonds, thereby polymerizing the amino acids delivered by tRNAs into a polypeptide chain. The nascent polypeptides leave the ribosome through a tunnel in the LSU and interact with protein factors that function in enzymatic processing, targeting, and the membrane insertion of nascent chains at the exit of the ribosomal tunnel. This Candida albicans (strain SC5314 / ATCC MYA-2876) (Yeast) protein is Large ribosomal subunit protein eL40.